A 295-amino-acid polypeptide reads, in one-letter code: Acetaldehyde dehydrogenase (295 aa).

11-14 (SGNI) serves as a coordination point for NAD(+). C127 serves as the catalytic Acyl-thioester intermediate. Residues 158–166 (SAGPGTRSN) and N269 each bind NAD(+).

The protein belongs to the acetaldehyde dehydrogenase family.

The enzyme catalyses acetaldehyde + NAD(+) + CoA = acetyl-CoA + NADH + H(+). The sequence is that of Acetaldehyde dehydrogenase from Brevibacillus brevis (strain 47 / JCM 6285 / NBRC 100599).